We begin with the raw amino-acid sequence, 159 residues long: Small ribosomal subunit protein uS9 (159 aa).

The protein belongs to the universal ribosomal protein uS9 family.

This chain is Small ribosomal subunit protein uS9, found in Methylocella silvestris (strain DSM 15510 / CIP 108128 / LMG 27833 / NCIMB 13906 / BL2).